A 637-amino-acid chain; its full sequence is DNA mismatch repair protein MutL (637 aa).

Positions 343 to 352 (QQSPDRQVSP) are enriched in polar residues. The disordered stretch occupies residues 343-411 (QQSPDRQVSP…SARNGDVSLP (69 aa)). Residues 365-380 (SIERKPSVSYDVRDSH) show a composition bias toward basic and acidic residues. Positions 388-397 (YSSGSSSYRS) are enriched in low complexity.

The protein belongs to the DNA mismatch repair MutL/HexB family.

Its function is as follows. This protein is involved in the repair of mismatches in DNA. It is required for dam-dependent methyl-directed DNA mismatch repair. May act as a 'molecular matchmaker', a protein that promotes the formation of a stable complex between two or more DNA-binding proteins in an ATP-dependent manner without itself being part of a final effector complex. The protein is DNA mismatch repair protein MutL of Shewanella halifaxensis (strain HAW-EB4).